A 407-amino-acid polypeptide reads, in one-letter code: Inhibin beta B chain (407 aa).

Positions 1 to 28 (MDGLPGRALGAACLLLLAAGWLGPEAWG) are cleaved as a signal peptide. Residues 26–62 (AWGSPTPPPTPAAPPPPPPPGSPGGSQDTCTSCGGFR) form a disordered region. A propeptide spanning residues 29-292 (SPTPPPTPAA…GDSRHRIRKR (264 aa)) is cleaved from the precursor. A compositionally biased stretch (pro residues) spans 30-47 (PTPPPTPAAPPPPPPPGS). The N-linked (GlcNAc...) asparagine glycan is linked to Asn-93. 4 cysteine pairs are disulfide-bonded: Cys-296/Cys-304, Cys-303/Cys-372, Cys-332/Cys-404, and Cys-336/Cys-406.

The protein belongs to the TGF-beta family. As to quaternary structure, dimeric, linked by one or more disulfide bonds. Inhibin B is a dimer of alpha and beta-B. Activin B is a homodimer of beta-B. Activin AB is a dimer of beta-A and beta-B. Interacts with FST and FSTL3. Activin B interacts with BMPR2.

The protein resides in the secreted. In terms of biological role, inhibins and activins inhibit and activate, respectively, the secretion of follitropin by the pituitary gland. Inhibins/activins are involved in regulating a number of diverse functions such as hypothalamic and pituitary hormone secretion, gonadal hormone secretion, germ cell development and maturation, erythroid differentiation, insulin secretion, nerve cell survival, embryonic axial development or bone growth, depending on their subunit composition. Inhibins appear to oppose the functions of activins. Activin B is a dimer of alpha and beta-B that plays a role in several essential biological processes including embryonic development, stem cell maintenance and differentiation, haematopoiesis, cell proliferation and wound healing. Signals through type I receptor ACVR1C, abundantly expressed in pancreatic beta cells, and type II receptors like ACVR2A or BMPR2. Upon ligand binding, these receptors phosphorylate intracellular signaling mediators SMAD2 and SMAD3, which form a complex with SMAD4, translocate to the nucleus, and regulate gene expression. Plays a crucial role in the induction of hepcidin by inflammation through activation of ACVR1C and subsequent phosphorylation of SMAD1/5/8. Regulates adipocyte lipid metabolism by decreasing non-esterified fatty acids and glycerol release and increases intracellular triglyceride content. Stimulates wound healing by promoting cell migration and hair follicle regeneration through the JNK and ERK signaling pathways downstream of RHOA. Its function is as follows. Inhibin B is a dimer of alpha and beta-B that plays a crucial role in the regulation of the reproductive system by inhibiting the secretion of follicle-stimulating hormone (FSH) from the anterior pituitary gland. Thereby, maintains reproductive homeostasis in both males and females. Acts as a more potent suppressor of FSH release than inhibin A. Functions as competitive receptor antagonist binding activin type II receptors with high affinity in the presence of the TGF-beta type III coreceptor/TGFBR3L. The sequence is that of Inhibin beta B chain (INHBB) from Homo sapiens (Human).